The sequence spans 58 residues: Small ribosomal subunit protein bS21 (58 aa).

This sequence belongs to the bacterial ribosomal protein bS21 family.

The polypeptide is Small ribosomal subunit protein bS21 (Picosynechococcus sp. (strain ATCC 27264 / PCC 7002 / PR-6) (Agmenellum quadruplicatum)).